The following is a 209-amino-acid chain: Large ribosomal subunit protein bL21m (209 aa).

Residues 1–43 (MAAAIAASALPGAFGRLVSVCSRSILASQGSGSASLWSASRRF) constitute a mitochondrion transit peptide.

This sequence belongs to the bacterial ribosomal protein bL21 family. As to quaternary structure, component of the mitochondrial ribosome large subunit (39S) which comprises a 16S rRNA and about 50 distinct proteins.

The protein resides in the mitochondrion. In Mus musculus (Mouse), this protein is Large ribosomal subunit protein bL21m (Mrpl21).